The primary structure comprises 55 residues: UPF0391 membrane protein RALTA_A0099 (55 aa).

The next 2 membrane-spanning stretches (helical) occupy residues 5–25 and 30–50; these read ALVFFVIALIAAIFGFGGIAA and IAKILFFIFLVVALVAAVMGL.

It belongs to the UPF0391 family.

It is found in the cell membrane. The chain is UPF0391 membrane protein RALTA_A0099 from Cupriavidus taiwanensis (strain DSM 17343 / BCRC 17206 / CCUG 44338 / CIP 107171 / LMG 19424 / R1) (Ralstonia taiwanensis (strain LMG 19424)).